A 121-amino-acid chain; its full sequence is Small ribosomal subunit protein uS13 (121 aa).

Residues 91-121 (HRRGLPTRGQNTKNNARTRKGPVKTVANKKK) form a disordered region. A compositionally biased stretch (basic residues) spans 106 to 121 (ARTRKGPVKTVANKKK).

It belongs to the universal ribosomal protein uS13 family. In terms of assembly, part of the 30S ribosomal subunit. Forms a loose heterodimer with protein S19. Forms two bridges to the 50S subunit in the 70S ribosome.

Functionally, located at the top of the head of the 30S subunit, it contacts several helices of the 16S rRNA. In the 70S ribosome it contacts the 23S rRNA (bridge B1a) and protein L5 of the 50S subunit (bridge B1b), connecting the 2 subunits; these bridges are implicated in subunit movement. Contacts the tRNAs in the A and P-sites. The polypeptide is Small ribosomal subunit protein uS13 (Macrococcus caseolyticus (strain JCSC5402) (Macrococcoides caseolyticum)).